The chain runs to 102 residues: Small ribosomal subunit protein uS10m (102 aa).

This sequence belongs to the universal ribosomal protein uS10 family.

It localises to the mitochondrion. The polypeptide is Small ribosomal subunit protein uS10m (RPS10) (Marchantia polymorpha (Common liverwort)).